The following is a 239-amino-acid chain: Serine protease SplC (239 aa).

The signal sequence occupies residues 1 to 36 (MNKNIVIKSMAALAILTSVTGINAAVVEETQQIANA). Residues His-75, Asp-113, and Ser-193 each act as charge relay system in the active site.

This sequence belongs to the peptidase S1B family.

It localises to the secreted. The polypeptide is Serine protease SplC (splC) (Staphylococcus aureus).